Reading from the N-terminus, the 143-residue chain is Large ribosomal subunit protein uL16 (143 aa).

Residues 1 to 17 (MLQPKRTKFRKAHKGRI) show a composition bias toward basic residues. The tract at residues 1–21 (MLQPKRTKFRKAHKGRIHGNA) is disordered.

Belongs to the universal ribosomal protein uL16 family. Part of the 50S ribosomal subunit.

Its function is as follows. Binds 23S rRNA and is also seen to make contacts with the A and possibly P site tRNAs. The chain is Large ribosomal subunit protein uL16 from Rhizorhabdus wittichii (strain DSM 6014 / CCUG 31198 / JCM 15750 / NBRC 105917 / EY 4224 / RW1) (Sphingomonas wittichii).